We begin with the raw amino-acid sequence, 273 residues long: Formamidopyrimidine-DNA glycosylase (273 aa).

Proline 2 acts as the Schiff-base intermediate with DNA in catalysis. Glutamate 3 (proton donor) is an active-site residue. Lysine 57 serves as the catalytic Proton donor; for beta-elimination activity. Residues histidine 91, arginine 110, and lysine 151 each contribute to the DNA site. The FPG-type zinc-finger motif lies at 236–270; that stretch reads QVYGRKGEACNDCGTIIEAKVIGQRNSYFCPHCQI. The active-site Proton donor; for delta-elimination activity is the arginine 260.

This sequence belongs to the FPG family. Monomer. The cofactor is Zn(2+).

It catalyses the reaction Hydrolysis of DNA containing ring-opened 7-methylguanine residues, releasing 2,6-diamino-4-hydroxy-5-(N-methyl)formamidopyrimidine.. The catalysed reaction is 2'-deoxyribonucleotide-(2'-deoxyribose 5'-phosphate)-2'-deoxyribonucleotide-DNA = a 3'-end 2'-deoxyribonucleotide-(2,3-dehydro-2,3-deoxyribose 5'-phosphate)-DNA + a 5'-end 5'-phospho-2'-deoxyribonucleoside-DNA + H(+). Its function is as follows. Involved in base excision repair of DNA damaged by oxidation or by mutagenic agents. Acts as a DNA glycosylase that recognizes and removes damaged bases. Has a preference for oxidized purines, such as 7,8-dihydro-8-oxoguanine (8-oxoG). Has AP (apurinic/apyrimidinic) lyase activity and introduces nicks in the DNA strand. Cleaves the DNA backbone by beta-delta elimination to generate a single-strand break at the site of the removed base with both 3'- and 5'-phosphates. The polypeptide is Formamidopyrimidine-DNA glycosylase (Actinobacillus pleuropneumoniae serotype 7 (strain AP76)).